Consider the following 337-residue polypeptide: Aspartate carbamoyltransferase catalytic subunit (337 aa).

2 residues coordinate carbamoyl phosphate: Arg54 and Thr55. Residue Lys82 coordinates L-aspartate. 3 residues coordinate carbamoyl phosphate: Arg104, His134, and Gln137. Residues Arg177 and Arg232 each contribute to the L-aspartate site. The carbamoyl phosphate site is built by Gly277 and Pro278.

It belongs to the aspartate/ornithine carbamoyltransferase superfamily. ATCase family. As to quaternary structure, heterododecamer (2C3:3R2) of six catalytic PyrB chains organized as two trimers (C3), and six regulatory PyrI chains organized as three dimers (R2).

The enzyme catalyses carbamoyl phosphate + L-aspartate = N-carbamoyl-L-aspartate + phosphate + H(+). The protein operates within pyrimidine metabolism; UMP biosynthesis via de novo pathway; (S)-dihydroorotate from bicarbonate: step 2/3. Its function is as follows. Catalyzes the condensation of carbamoyl phosphate and aspartate to form carbamoyl aspartate and inorganic phosphate, the committed step in the de novo pyrimidine nucleotide biosynthesis pathway. This chain is Aspartate carbamoyltransferase catalytic subunit, found in Arthrobacter sp. (strain FB24).